The chain runs to 322 residues: Endochitinase (322 aa).

Positions 1–21 (MKMRYCVLVSVLAILVIRGSA) are cleaved as a signal peptide. In terms of domain architecture, Chitin-binding type-1 spans 22–62 (ENCGRQAGGALCPGGQCCSKWGWCGTTPDHCGTDCQSQCGG). 4 cysteine pairs are disulfide-bonded: Cys24–Cys39, Cys33–Cys45, Cys38–Cys52, and Cys56–Cys60.

Belongs to the glycosyl hydrolase 19 family. Chitinase class I subfamily.

The enzyme catalyses Random endo-hydrolysis of N-acetyl-beta-D-glucosaminide (1-&gt;4)-beta-linkages in chitin and chitodextrins.. Functionally, defense against chitin-containing fungal pathogens. The protein is Endochitinase of Actinidia chinensis var. chinensis (Chinese soft-hair kiwi).